The following is a 248-amino-acid chain: 2,3-bisphosphoglycerate-dependent phosphoglycerate mutase (248 aa).

Residues 8-15 (RHGESEWN), 21-22 (TG), Arg60, 87-90 (ERHY), Lys98, 114-115 (RR), and 183-184 (GN) contribute to the substrate site. The Tele-phosphohistidine intermediate role is filled by His9. Glu87 (proton donor/acceptor) is an active-site residue.

The protein belongs to the phosphoglycerate mutase family. BPG-dependent PGAM subfamily.

It catalyses the reaction (2R)-2-phosphoglycerate = (2R)-3-phosphoglycerate. The protein operates within carbohydrate degradation; glycolysis; pyruvate from D-glyceraldehyde 3-phosphate: step 3/5. In terms of biological role, catalyzes the interconversion of 2-phosphoglycerate and 3-phosphoglycerate. The polypeptide is 2,3-bisphosphoglycerate-dependent phosphoglycerate mutase (Borrelia garinii subsp. bavariensis (strain ATCC BAA-2496 / DSM 23469 / PBi) (Borreliella bavariensis)).